A 78-amino-acid polypeptide reads, in one-letter code: Small ribosomal subunit protein bS18 (78 aa).

The protein belongs to the bacterial ribosomal protein bS18 family. In terms of assembly, part of the 30S ribosomal subunit. Forms a tight heterodimer with protein bS6.

Functionally, binds as a heterodimer with protein bS6 to the central domain of the 16S rRNA, where it helps stabilize the platform of the 30S subunit. The protein is Small ribosomal subunit protein bS18 of Pseudothermotoga lettingae (strain ATCC BAA-301 / DSM 14385 / NBRC 107922 / TMO) (Thermotoga lettingae).